A 347-amino-acid polypeptide reads, in one-letter code: MNPLIFIMLILTIILGTSIILTSTHWFMIWLGFEMNMMAMIPVLMKKYSPRAAEAATKYFLTQATASMILMLALIINLMYSGQWTIMNMTNNMASLLITIALTMKLGLAPFHFWVPEVTQGVSLQAGLILLTWQKIAPLAVMYQIFASINPNLLLTMALLSIMIGGWGGLNQTQLRKIMAYSSIAHMGWMTAIMIYNPNLMLLNLLLYILMTTSMFMMFMYNSTTTTLSLSLTWNKTPLMTVLMMTTLLSLGGLPPLTGFMPKWMIIHELTKNNSVILPTSMAILALINLFFYMRLTYSTSLTMFPTINNMKMKWQFQNTHHTTLLAPLITLSTLILPLTPMFILMT.

The next 11 membrane-spanning stretches (helical) occupy residues 1 to 21 (MNPL…SIIL), 25 to 45 (HWFM…PVLM), 59 to 79 (YFLT…INLM), 96 to 116 (LLIT…FWVP), 122 to 142 (VSLQ…LAVM), 145 to 165 (IFAS…IMIG), 178 to 198 (IMAY…IYNP), 200 to 220 (LMLL…MMFM), 242 to 262 (VLMM…GFMP), 274 to 294 (NSVI…FFYM), and 325 to 345 (LLAP…MFIL).

Belongs to the complex I subunit 2 family. In terms of assembly, core subunit of respiratory chain NADH dehydrogenase (Complex I) which is composed of 45 different subunits. Interacts with TMEM242.

The protein localises to the mitochondrion inner membrane. It catalyses the reaction a ubiquinone + NADH + 5 H(+)(in) = a ubiquinol + NAD(+) + 4 H(+)(out). In terms of biological role, core subunit of the mitochondrial membrane respiratory chain NADH dehydrogenase (Complex I) which catalyzes electron transfer from NADH through the respiratory chain, using ubiquinone as an electron acceptor. Essential for the catalytic activity and assembly of complex I. The protein is NADH-ubiquinone oxidoreductase chain 2 of Myosorex kihaulei (Kihaule's mouse shrew).